The primary structure comprises 322 residues: Cytochrome c biogenesis protein CcsA (322 aa).

The next 8 helical transmembrane spans lie at Leu-6–Phe-26, Leu-45–Phe-65, Asn-69–Tyr-89, Leu-97–Leu-117, Met-144–Leu-164, Leu-230–Asn-250, Trp-265–Trp-285, and Ala-291–Leu-311.

It belongs to the CcmF/CycK/Ccl1/NrfE/CcsA family. In terms of assembly, may interact with Ccs1.

It localises to the plastid. The protein localises to the cyanelle thylakoid membrane. Its function is as follows. Required during biogenesis of c-type cytochromes (cytochrome c6 and cytochrome f) at the step of heme attachment. The chain is Cytochrome c biogenesis protein CcsA from Cyanophora paradoxa.